A 245-amino-acid polypeptide reads, in one-letter code: DNA polymerase sliding clamp (245 aa).

Belongs to the PCNA family. In terms of assembly, homotrimer. The subunits circularize to form a toroid; DNA passes through its center. Replication factor C (RFC) is required to load the toroid on the DNA.

Its function is as follows. Sliding clamp subunit that acts as a moving platform for DNA processing. Responsible for tethering the catalytic subunit of DNA polymerase and other proteins to DNA during high-speed replication. The chain is DNA polymerase sliding clamp from Picrophilus torridus (strain ATCC 700027 / DSM 9790 / JCM 10055 / NBRC 100828 / KAW 2/3).